The chain runs to 378 residues: B3 domain-containing protein Os03g0622200 (378 aa).

Residues 29 to 124 constitute a DNA-binding region (TF-B3 1); it reads SKHFLKHMVG…SFDVLIFDPS (96 aa). A disordered region spans residues 140 to 159; that stretch reads GRAENSAGAEQGGRNGRRTP. Positions 256-370 form a DNA-binding region, TF-B3 2; sequence FVQVIHSSHV…TMTVHVLRRV (115 aa).

It localises to the nucleus. The polypeptide is B3 domain-containing protein Os03g0622200 (Oryza sativa subsp. japonica (Rice)).